The following is a 281-amino-acid chain: Probable endonuclease 4 (281 aa).

Zn(2+) is bound by residues His67, His107, Glu144, Asp178, His181, His215, Asp228, His230, and Glu260.

The protein belongs to the AP endonuclease 2 family. Requires Zn(2+) as cofactor.

It carries out the reaction Endonucleolytic cleavage to 5'-phosphooligonucleotide end-products.. Endonuclease IV plays a role in DNA repair. It cleaves phosphodiester bonds at apurinic or apyrimidinic (AP) sites, generating a 3'-hydroxyl group and a 5'-terminal sugar phosphate. This is Probable endonuclease 4 from Methanocorpusculum labreanum (strain ATCC 43576 / DSM 4855 / Z).